Here is a 443-residue protein sequence, read N- to C-terminus: Crh-like protein 2 (443 aa).

The first 20 residues, 1–20 (MVRIGSSLLLATLAATTVSA), serve as a signal peptide directing secretion. The GH16 domain occupies 21 to 306 (ASDPPKCSQD…TVECYDPPSG (286 aa)). C56 and C67 are oxidised to a cystine. E164 acts as the Nucleophile in catalysis. The Proton donor role is filled by E168. E168 lines the chitin pocket. 2 N-linked (GlcNAc...) asparagine glycosylation sites follow: N194 and N237. Chitin contacts are provided by W257 and T268. N-linked (GlcNAc...) asparagine glycans are attached at residues N332 and N359. 2 stretches are compositionally biased toward low complexity: residues 350-367 (ASSS…SANT) and 378-410 (EPGN…SETS). The interval 350-420 (ASSSASGSAN…ASSNKNAAPS (71 aa)) is disordered. A compositionally biased stretch (polar residues) spans 411 to 420 (ASSNKNAAPS). Residue N416 is the site of GPI-like-anchor amidated asparagine attachment. A propeptide spans 417–443 (AAPSQNERVLNGSFFAVLVAVVALVTL) (removed in mature form). N-linked (GlcNAc...) asparagine glycosylation is present at N427.

It belongs to the glycosyl hydrolase 16 family. CRH1 subfamily. The GPI-like anchor contains a phosphoceramide lipid group. The anchor position has not been determined.

It is found in the cell membrane. Its subcellular location is the secreted. The protein resides in the cell wall. It carries out the reaction Random endo-hydrolysis of N-acetyl-beta-D-glucosaminide (1-&gt;4)-beta-linkages in chitin and chitodextrins.. Its function is as follows. Dual chitinase/transglycosylase that plays a role in cell wall architecture. Chitinase and transglycosylase activities are coupled. Required for the polysaccharide cross-linking at the septa and the cell wall. More specifically, transfers chitin to 1,6-beta-glucan in the cell wall. The polypeptide is Crh-like protein 2 (Aspergillus fumigatus (strain ATCC MYA-4609 / CBS 101355 / FGSC A1100 / Af293) (Neosartorya fumigata)).